Consider the following 530-residue polypeptide: AP-4 complex subunit mu (530 aa).

Positions 164 to 187 (PKQGVKPIHSGSKNSSSGGSSLST) are disordered. A compositionally biased stretch (low complexity) spans 173–186 (SGSKNSSSGGSSLS). Residues 227-527 (DNEIYIDLCE…ITDSKSFVSR (301 aa)) form the MHD domain.

This sequence belongs to the adaptor complexes medium subunit family. In terms of assembly, may be part of the adaptor protein complex 4 (AP-4), a heterotetramer composed of two large adaptins (epsilon-type subunitand beta-type subunit), a medium adaptin (mu-type subunit) and a small adaptin (sigma-type).

It is found in the golgi apparatus. The protein localises to the trans-Golgi network membrane. Its subcellular location is the early endosome. Probable component of an adaptor protein complex. Adaptor protein complexes are vesicle coat components involved both in vesicle formation and cargo selection. They control the vesicular transport of proteins in different trafficking pathways. The chain is AP-4 complex subunit mu (apm4) from Dictyostelium discoideum (Social amoeba).